We begin with the raw amino-acid sequence, 331 residues long: Ketol-acid reductoisomerase (NADP(+)) (331 aa).

In terms of domain architecture, KARI N-terminal Rossmann spans 2 to 182 (AKMYYDSDCN…GAGRAGILET (181 aa)). NADP(+) is bound by residues 25 to 28 (YGSQ), S51, and 83 to 86 (DEKQ). H108 is a catalytic residue. G134 lines the NADP(+) pocket. In terms of domain architecture, KARI C-terminal knotted spans 183–329 (TFREETETDL…AELRKMMSWL (147 aa)). Positions 191, 195, 227, and 231 each coordinate Mg(2+). Position 252 (S252) interacts with substrate.

This sequence belongs to the ketol-acid reductoisomerase family. Mg(2+) is required as a cofactor.

The enzyme catalyses (2R)-2,3-dihydroxy-3-methylbutanoate + NADP(+) = (2S)-2-acetolactate + NADPH + H(+). It catalyses the reaction (2R,3R)-2,3-dihydroxy-3-methylpentanoate + NADP(+) = (S)-2-ethyl-2-hydroxy-3-oxobutanoate + NADPH + H(+). Its pathway is amino-acid biosynthesis; L-isoleucine biosynthesis; L-isoleucine from 2-oxobutanoate: step 2/4. It functions in the pathway amino-acid biosynthesis; L-valine biosynthesis; L-valine from pyruvate: step 2/4. In terms of biological role, involved in the biosynthesis of branched-chain amino acids (BCAA). Catalyzes an alkyl-migration followed by a ketol-acid reduction of (S)-2-acetolactate (S2AL) to yield (R)-2,3-dihydroxy-isovalerate. In the isomerase reaction, S2AL is rearranged via a Mg-dependent methyl migration to produce 3-hydroxy-3-methyl-2-ketobutyrate (HMKB). In the reductase reaction, this 2-ketoacid undergoes a metal-dependent reduction by NADPH to yield (R)-2,3-dihydroxy-isovalerate. The protein is Ketol-acid reductoisomerase (NADP(+)) of Ruminiclostridium cellulolyticum (strain ATCC 35319 / DSM 5812 / JCM 6584 / H10) (Clostridium cellulolyticum).